Reading from the N-terminus, the 167-residue chain is SAR-endolysin (167 aa).

A helical; Signal-anchor for type II membrane protein membrane pass occupies residues 10-32 (SVMAAISGGAIAIASVLITGPGG). Active-site proton donor/acceptor residues include Glu37 and Asp46.

Belongs to the glycosyl hydrolase 24 family.

The protein resides in the host cell inner membrane. The catalysed reaction is Hydrolysis of (1-&gt;4)-beta-linkages between N-acetylmuramic acid and N-acetyl-D-glucosamine residues in a peptidoglycan and between N-acetyl-D-glucosamine residues in chitodextrins.. Functionally, signal-arrest-release (SAR) endolysin with lysozyme activity that degrades host peptidoglycans and participates with the pinholin and spanin proteins in the sequential events which lead to programmed host cell lysis releasing the mature viral particles. Once the pinholin has permeabilized the host cell membrane, the SAR-endolysin is released into the periplasm where it breaks down the peptidoglycan layer. This Bacteriophage PS119 protein is SAR-endolysin (19).